The chain runs to 975 residues: MEVTEANLQLLAGYLQQTLSADPNVRRPAEKLLESTELQQNYPILLLNLIDKAQMDMTTRVAGAIAFKNYIKRNWAAHLDSDGPDRIHESDRNTIKTLIVTLMLHSPVALQKQLSDAVSIIGKYDFPKKWPQLIDEMVERFASGDFNVINGVLQTAHSLFKRYRYEFKSQALWEEIKFVLDRMAKPLTDLLQAKMQLTKVHENNAGALKVIYGSLVLVNKVFFSLNSQDLPEFFEDNINTWMGAFIQQLAADVPSLRTADDEDAGVLEHLRAQVCENICLYAKKYDEEFKPFMEQFVTAVWELLVKTSLHTKYDSLVSHALQFLSVVADRQHYQSIFENPEILAQICDKVVIPNLDIRPSDEEIFEDSPEEYIRRDIEGSDIDTRRRAACDLVKTLSINFEQKIFGIFGQYLERLLTKYKENPATNWRSKDTAIYLVTSWASRGGTQKHGITQTSELVPLPEFCAQQIIPELERPNINEFPVLKAAAIKYVMVFRSILGPQVLASCLPQLIRHLPAESSVVHSYAACSVEKILSMRDASNAIVFGPQILAPYTTELISGLFATLSLPGSGENEYVMKAIMRSFSVLQSAAMPFMGVALPRLTEILTQVAKNPSRPQFNHYLFETLALCIKIVCHADSSAVSSFEEALFPVFQGILQQDIVEFMPYVFQMLSVLLEMREGTGTIPEPYWALFPCLLSPALWDRTGNVTPLIRLISAFIKQGSAQIQALGKLSGILGIFQKMIASKANDHEGFYLLQNLLSYYPPAEIQTNLRQIFGLLFQRLSLSKTPKYLSGIIIFFSFYVIKFSGSQMAQLIDEIQPNLFGMLLDRVFITEMGKIPKEQDRKMVAVGVTKLLTETPEILQQQYATFWPRLLHSLIDLFERPPEKLMGLEIGETAGVAEDPDAGYQVAFAQLTHAQPNQQDHLAEIKDARQFLATSLSKFAQARAGEFSTLLSPLEPEYKQVLQKYCDQAGVRIA.

The Importin N-terminal domain maps to 29 to 105 (AEKLLESTEL…KTLIVTLMLH (77 aa)).

This sequence belongs to the XPO2/CSE1 family. In terms of assembly, binds with high affinity to importin-alpha only in the presence of RanGTP.

It localises to the cytoplasm. The protein localises to the nucleus. Its function is as follows. Export receptor for importin alpha. Mediates importin-alpha re-export from the nucleus to the cytoplasm after import substrates have been released into the nucleoplasm. The chain is Exportin-2 from Drosophila melanogaster (Fruit fly).